A 493-amino-acid polypeptide reads, in one-letter code: D-aminoacyl-tRNA deacylase (493 aa).

Residues D22–A37 show a composition bias toward basic and acidic residues. 2 disordered regions span residues D22–Y44 and P441–E493.

It belongs to the DtdA deacylase family. In terms of assembly, monomer. Zn(2+) serves as cofactor.

It carries out the reaction a D-aminoacyl-tRNA + H2O = a tRNA + a D-alpha-amino acid + H(+). The catalysed reaction is glycyl-tRNA(Ala) + H2O = tRNA(Ala) + glycine + H(+). Functionally, D-aminoacyl-tRNA deacylase with broad substrate specificity. By recycling D-aminoacyl-tRNA to D-amino acids and free tRNA molecules, this enzyme counteracts the toxicity associated with the formation of D-aminoacyl-tRNA entities in vivo. The sequence is that of D-aminoacyl-tRNA deacylase from Halorubrum lacusprofundi (strain ATCC 49239 / DSM 5036 / JCM 8891 / ACAM 34).